A 346-amino-acid chain; its full sequence is LRP2-binding protein (346 aa).

A TPR repeat occupies 58–91; the sequence is AMAYFLRGQLYFEEGWYEEALAQFEEIQEKDHQA. Sel1-like repeat units follow at residues 92–124, 132–167, 172–205, 206–241, 242–276, and 296–331; these read IYQL…DSSC, FAAA…DNGN, VKAQ…GNGN, LESQ…ERGN, VYAQ…EVHD, and AMAS…RLNP.

In terms of assembly, interacts with LRP2.

The protein resides in the cytoplasm. In terms of biological role, may act as an adapter that regulates LRP2 function. This is LRP2-binding protein (Lrp2bp) from Rattus norvegicus (Rat).